Reading from the N-terminus, the 191-residue chain is UPF0398 protein LCABL_17010 (191 aa).

This sequence belongs to the UPF0398 family.

The protein is UPF0398 protein LCABL_17010 of Lacticaseibacillus casei (strain BL23) (Lactobacillus casei).